A 163-amino-acid chain; its full sequence is Retinoic acid receptor responder protein 2 (163 aa).

The first 20 residues, 1–20 (MKYLLISLALWLGMVGIHGT), serve as a signal peptide directing secretion. 3 disulfide bridges follow: Cys-79-Cys-89, Cys-100-Cys-119, and Cys-103-Cys-135. Residues 158-163 (RALKHK) constitute a propeptide that is removed on maturation.

Secreted in an inactive precursor form, prochemerin, which is proteolytically processed by a variety of extracellular proteases to generate forms with differing levels of bioactivity. For example, the removal of six amino acids results in chemerin-157, which exhibits the highest activity, while removal of seven amino acids results in chemerin-156 which has slightly less activity. Some proteases are able to cleave at more than one site and chemerin forms may be sequentially processed by different enzymes to modulate activity levels. The coordinated expression and activity of chemerin-modifying enzymes is essential for regulating its bioactivation, inactivation and, consequently, biological function. Cathepsin G cleaves seven C-terminal amino acids from prochemerin (chemerin-156), elastase is able to cleave six (chemerin-157), eight (chemerin-155) or eleven (chemerin-152), plasmin cleaves five amino acids (chemerin-158), and tryptase cleaves five (chemerin-158) or eight (chemerin-155). Multiple cleavages might be required to fully activate chemerin, with an initial tryptase cleavage resulting in chemerin with low activity (chemerin-158), and a second cleavage by carboxypeptidase N or B producing highly active chemerin (chemerin-157).

The protein resides in the secreted. In terms of biological role, adipocyte-secreted protein (adipokine) that regulates adipogenesis, metabolism and inflammation through activation of the chemokine-like receptor 1 (CMKLR1). Also acts as a ligand for CMKLR2. Can also bind to C-C chemokine receptor-like 2 (CCRL2), but with a lower affinity than it does to CMKLR1 or CMKLR2. Positively regulates adipocyte differentiation, modulates the expression of adipocyte genes involved in lipid and glucose metabolism and might play a role in angiogenesis, a process essential for the expansion of white adipose tissue. Also acts as a pro-inflammatory adipokine, causing an increase in secretion of pro-inflammatory and prodiabetic adipokines, which further impair adipose tissue metabolic function and have negative systemic effects including impaired insulin sensitivity, altered glucose and lipid metabolism, and a decrease in vascular function in other tissues. Can have both pro- and anti-inflammatory properties depending on the modality of enzymatic cleavage by different classes of proteases. Acts as a chemotactic factor for leukocyte populations expressing CMKLR1, particularly immature plasmacytoid dendritic cells, but also immature myeloid DCs, macrophages and natural killer cells. Exerts an anti-inflammatory role by preventing TNF/TNFA-induced VCAM1 expression and monocytes adhesion in vascular endothelial cells. The effect is mediated via inhibiting activation of NF-kappa-B and CRK/p38 through stimulation of AKT1/NOS3 signaling and nitric oxide production. Its dual role in inflammation and metabolism might provide a link Exhibits an antimicrobial function in the skin. The sequence is that of Retinoic acid receptor responder protein 2 (RARRES2) from Cricetulus griseus (Chinese hamster).